The chain runs to 530 residues: Autoinducer-2 kinase (530 aa).

Belongs to the FGGY kinase family.

It is found in the cytoplasm. The catalysed reaction is (S)-4,5-dihydroxypentane-2,3-dione + ATP = (2S)-2-hydroxy-3,4-dioxopentyl phosphate + ADP + H(+). Catalyzes the phosphorylation of autoinducer-2 (AI-2) to phospho-AI-2, which subsequently inactivates the transcriptional regulator LsrR and leads to the transcription of the lsr operon. Phosphorylates the ring-open form of (S)-4,5-dihydroxypentane-2,3-dione (DPD), which is the precursor to all AI-2 signaling molecules, at the C5 position. This chain is Autoinducer-2 kinase, found in Escherichia coli (strain K12 / DH10B).